The primary structure comprises 142 residues: Hemoglobin subunit alpha 1 (142 aa).

An N-acetylserine modification is found at serine 1. Residues 1–142 (SLSDKDKAAV…VSLALSERYR (142 aa)) form the Globin domain. Histidine 59 lines the O2 pocket. Residue histidine 88 participates in heme b binding.

This sequence belongs to the globin family. Hb1 is a heterotetramer of two alpha-1 chains and two beta-1 chains. Hb2 is a heterotetramer of two alpha-2 chains and two beta-1 chains. HbC is a heterotetramer of two alpha-1 chains and two beta-2 chains. In terms of tissue distribution, red blood cells.

Functionally, involved in oxygen transport from gills to the various peripheral tissues. In Eleginops maclovinus (Patagonian blennie), this protein is Hemoglobin subunit alpha 1.